We begin with the raw amino-acid sequence, 154 residues long: Ribonuclease P protein subunit p21 (154 aa).

Ala2 is subject to N-acetylalanine. The Zn(2+) site is built by Cys62, Cys65, Cys92, and Cys95. Residues 117–154 (QLGSQADSKPLQPLPNTAHSISDRLPEEKMQTQGSSNQ) are disordered. Residues 137–146 (ISDRLPEEKM) show a composition bias toward basic and acidic residues.

It belongs to the eukaryotic/archaeal RNase P protein component 4 family. RNase P consists of a catalytic RNA moiety and about 10 protein subunits; POP1, POP4, POP5, POP7, RPP14, RPP21, RPP25, RPP30, RPP38 and RPP40. Within the RNase P complex, POP1, POP7 and RPP25 form the 'finger' subcomplex, POP5, RPP14, RPP40 and homodimeric RPP30 form the 'palm' subcomplex, and RPP21, POP4 and RPP38 form the 'wrist' subcomplex. All subunits of the RNase P complex interact with the catalytic RNA.

The protein resides in the nucleus. Its subcellular location is the nucleolus. Component of ribonuclease P, a ribonucleoprotein complex that generates mature tRNA molecules by cleaving their 5'-ends. The polypeptide is Ribonuclease P protein subunit p21 (RPP21) (Homo sapiens (Human)).